Here is a 429-residue protein sequence, read N- to C-terminus: Serine hydroxymethyltransferase (429 aa).

(6S)-5,6,7,8-tetrahydrofolate contacts are provided by residues Leu126 and 130 to 132 (GHL). Lys235 carries the post-translational modification N6-(pyridoxal phosphate)lysine. 359 to 361 (SPF) contacts (6S)-5,6,7,8-tetrahydrofolate.

This sequence belongs to the SHMT family. As to quaternary structure, homodimer. The cofactor is pyridoxal 5'-phosphate.

Its subcellular location is the cytoplasm. The enzyme catalyses (6R)-5,10-methylene-5,6,7,8-tetrahydrofolate + glycine + H2O = (6S)-5,6,7,8-tetrahydrofolate + L-serine. It participates in one-carbon metabolism; tetrahydrofolate interconversion. The protein operates within amino-acid biosynthesis; glycine biosynthesis; glycine from L-serine: step 1/1. In terms of biological role, catalyzes the reversible interconversion of serine and glycine with tetrahydrofolate (THF) serving as the one-carbon carrier. This reaction serves as the major source of one-carbon groups required for the biosynthesis of purines, thymidylate, methionine, and other important biomolecules. Also exhibits THF-independent aldolase activity toward beta-hydroxyamino acids, producing glycine and aldehydes, via a retro-aldol mechanism. The polypeptide is Serine hydroxymethyltransferase (Synechococcus sp. (strain CC9311)).